The following is a 505-amino-acid chain: ATP synthase subunit alpha (505 aa).

170–177 (GDRQTGKT) contributes to the ATP binding site.

It belongs to the ATPase alpha/beta chains family. As to quaternary structure, F-type ATPases have 2 components, CF(1) - the catalytic core - and CF(0) - the membrane proton channel. CF(1) has five subunits: alpha(3), beta(3), gamma(1), delta(1), epsilon(1). CF(0) has four main subunits: a(1), b(1), b'(1) and c(9-12).

It is found in the cellular thylakoid membrane. The enzyme catalyses ATP + H2O + 4 H(+)(in) = ADP + phosphate + 5 H(+)(out). In terms of biological role, produces ATP from ADP in the presence of a proton gradient across the membrane. The alpha chain is a regulatory subunit. This chain is ATP synthase subunit alpha, found in Prochlorococcus marinus (strain MIT 9313).